Here is a 257-residue protein sequence, read N- to C-terminus: Zinc transporter ZupT (257 aa).

3 helical membrane passes run 5–25, 32–52, and 61–81; these read LILT…GVLG, LLAF…LMEM, and GMSP…YFGL. Residues Asn120 and Glu123 each contribute to the Fe(2+) site. Positions 123 and 148 each coordinate Zn(2+). A run of 4 helical transmembrane segments spans residues 137–157, 171–191, 195–215, and 236–256; these read LGFG…LAVA, ILWA…AWLI, MISP…MVAL, and GVLC…TVGI. Fe(2+) contacts are provided by Asn149, Glu152, and Glu181. Glu152 provides a ligand contact to Zn(2+).

Belongs to the ZIP transporter (TC 2.A.5) family. ZupT subfamily.

Its subcellular location is the cell inner membrane. It carries out the reaction Zn(2+)(in) = Zn(2+)(out). Functionally, mediates zinc uptake. May also transport other divalent cations. The polypeptide is Zinc transporter ZupT (Escherichia coli O81 (strain ED1a)).